Reading from the N-terminus, the 190-residue chain is Cancer-related nucleoside-triphosphatase homolog (190 aa).

The residue at position 2 (Ala-2) is an N-acetylalanine. ATP-binding positions include 9–16 (GPPGVGKT) and 109–116 (ICVIDEVG). Lys-165 carries the post-translational modification N6-acetyllysine.

This sequence belongs to the THEP1 NTPase family. As to quaternary structure, monomer.

It carries out the reaction a ribonucleoside 5'-triphosphate + H2O = a ribonucleoside 5'-diphosphate + phosphate + H(+). The catalysed reaction is 5-methyl-UTP + H2O = 5-methyl-UDP + phosphate + H(+). It catalyses the reaction CTP + H2O = CDP + phosphate + H(+). The enzyme catalyses ATP + H2O = ADP + phosphate + H(+). It carries out the reaction GTP + H2O = GDP + phosphate + H(+). Has nucleotide phosphatase activity towards ATP, GTP, CTP, TTP and UTP. Hydrolyzes nucleoside diphosphates with lower efficiency. This chain is Cancer-related nucleoside-triphosphatase homolog (NTPCR), found in Bos taurus (Bovine).